The chain runs to 310 residues: tRNA pseudouridine synthase B (310 aa).

Catalysis depends on Asp-38, which acts as the Nucleophile.

The protein belongs to the pseudouridine synthase TruB family. Type 1 subfamily.

The catalysed reaction is uridine(55) in tRNA = pseudouridine(55) in tRNA. In terms of biological role, responsible for synthesis of pseudouridine from uracil-55 in the psi GC loop of transfer RNAs. This Geotalea uraniireducens (strain Rf4) (Geobacter uraniireducens) protein is tRNA pseudouridine synthase B.